Reading from the N-terminus, the 518-residue chain is MSDYPPPNYPPPNHPQYQQQQDETYHVRPDMERQQDFGYYEKPTPSQNFDDSFKVEKPKFNDWPFAIFFWLVVAGFIAVAGITLNALRSTYGFQGGSIYGSGNTFTLNTNTIILFAFIIVMAFILSAAIIVFARLAPKAFIVTGVILNVVLGIGTAIFYFVEKYYSAAIVFLIFALFGAWCYWSSRHRIPLSATILTIVIDVMKMYPSTLIASFIGLIFSAAFSALFSIVIVATYVKYDPNSNNEACSVGGGSCSKGKLIGVLVFVFFAGYYISEVIRNVIHVVIAGIYGTWYYLANSDQGAPKHPALSSLKRALTYCFGSITFGSLIVSLIQLLRQFISILRSNFAADGNGWGVCGMIILDFFVGFIDWLVRYLNKYAYCYVALYGKSYIKSAKDTFDLIRFKGMDALINDMFINTALNLYSLFVAYLVALLAYLYLKFTKPEYNSGGAFYAPVIAFAFLIAGQINRISLTVIESGTATFFVALAKDPEIFQMTNRNRFDDIFRNYPQVLEKITSDH.

Pro residues predominate over residues 1–14 (MSDYPPPNYPPPNH). Positions 1–24 (MSDYPPPNYPPPNHPQYQQQQDET) are disordered. The Cytoplasmic segment spans residues 1 to 63 (MSDYPPPNYP…KVEKPKFNDW (63 aa)). Residues 64 to 84 (PFAIFFWLVVAGFIAVAGITL) traverse the membrane as a helical segment. At 85–111 (NALRSTYGFQGGSIYGSGNTFTLNTNT) the chain is on the extracellular side. Residues 112-132 (IILFAFIIVMAFILSAAIIVF) traverse the membrane as a helical segment. Topologically, residues 133 to 139 (ARLAPKA) are cytoplasmic. The chain crosses the membrane as a helical span at residues 140–160 (FIVTGVILNVVLGIGTAIFYF). Topologically, residues 161-163 (VEK) are extracellular. A helical transmembrane segment spans residues 164-184 (YYSAAIVFLIFALFGAWCYWS). Residues 185–210 (SRHRIPLSATILTIVIDVMKMYPSTL) are Cytoplasmic-facing. A helical transmembrane segment spans residues 211 to 231 (IASFIGLIFSAAFSALFSIVI). The Extracellular segment spans residues 232 to 256 (VATYVKYDPNSNNEACSVGGGSCSK). The helical transmembrane segment at 257 to 277 (GKLIGVLVFVFFAGYYISEVI) threads the bilayer. Residues 278–314 (RNVIHVVIAGIYGTWYYLANSDQGAPKHPALSSLKRA) lie on the Cytoplasmic side of the membrane. A helical transmembrane segment spans residues 315–335 (LTYCFGSITFGSLIVSLIQLL). Over 336-351 (RQFISILRSNFAADGN) the chain is Extracellular. The helical transmembrane segment at 352–372 (GWGVCGMIILDFFVGFIDWLV) threads the bilayer. Residues 373–417 (RYLNKYAYCYVALYGKSYIKSAKDTFDLIRFKGMDALINDMFINT) lie on the Cytoplasmic side of the membrane. Residues 418–438 (ALNLYSLFVAYLVALLAYLYL) traverse the membrane as a helical segment. Residues 439–445 (KFTKPEY) lie on the Extracellular side of the membrane. The chain crosses the membrane as a helical span at residues 446 to 466 (NSGGAFYAPVIAFAFLIAGQI). The Cytoplasmic portion of the chain corresponds to 467-518 (NRISLTVIESGTATFFVALAKDPEIFQMTNRNRFDDIFRNYPQVLEKITSDH).

The protein belongs to the CTL (choline transporter-like) family.

Its subcellular location is the cell membrane. Its function is as follows. Probably involved in transport through the plasma membrane. The protein is Protein PNS1 (PNS1) of Candida albicans (strain SC5314 / ATCC MYA-2876) (Yeast).